A 1074-amino-acid polypeptide reads, in one-letter code: Telomerase reverse transcriptase (1074 aa).

Residues 240 to 265 (DKVSCETMQDGESGKTTLVQKQPGSK) are disordered. Residues 253–262 (GKTTLVQKQP) show a composition bias toward polar residues. A TFLY; involved in RNA binding motif is present at residues 300–305 (TLGFLY). 2 interaction with RNA template regions span residues 355 to 360 (LPRRFF) and 461 to 486 (WKIK…ELSY). The Reverse transcriptase domain maps to 552 to 877 (TPDQVAALPK…CLFPWCGLLL (326 aa)). The Mg(2+) site is built by Asp649, Asp810, and Asp811.

This sequence belongs to the reverse transcriptase family. Telomerase subfamily. In terms of assembly, catalytic subunit of the telomerase holoenzyme complex composed minimally of TERT and the telomerase RNA template component (TERC). Detected at highest levels in gill, ovary and testis, and at lower levels in brain, eye, heart, skin, spleen and stomach.

It localises to the nucleus. It is found in the chromosome. Its subcellular location is the telomere. It catalyses the reaction DNA(n) + a 2'-deoxyribonucleoside 5'-triphosphate = DNA(n+1) + diphosphate. Telomerase is a ribonucleoprotein enzyme essential for the replication of chromosome termini in most eukaryotes. It elongates telomeres. It is a reverse transcriptase that adds simple sequence repeats to chromosome ends by copying a template sequence within the RNA component of the enzyme. This Takifugu rubripes (Japanese pufferfish) protein is Telomerase reverse transcriptase.